A 147-amino-acid chain; its full sequence is uncharacterized protein (147 aa).

This is an uncharacterized protein from Schizosaccharomyces pombe (strain 972 / ATCC 24843) (Fission yeast).